The primary structure comprises 197 residues: Phosphoheptose isomerase (197 aa).

Residues 36 to 197 (MVNALLNEGK…IDSQLFGSEE (162 aa)) enclose the SIS domain. A substrate-binding site is contributed by 51–53 (NGG). Zn(2+) contacts are provided by His-60 and Glu-64. Substrate is bound by residues Glu-64, 93-94 (ND), 119-121 (STS), Ser-124, and Gln-174. Residues Gln-174 and His-182 each contribute to the Zn(2+) site.

The protein belongs to the SIS family. GmhA subfamily. Homotetramer. It depends on Zn(2+) as a cofactor.

It is found in the cytoplasm. The catalysed reaction is 2 D-sedoheptulose 7-phosphate = D-glycero-alpha-D-manno-heptose 7-phosphate + D-glycero-beta-D-manno-heptose 7-phosphate. Its pathway is carbohydrate biosynthesis; D-glycero-D-manno-heptose 7-phosphate biosynthesis; D-glycero-alpha-D-manno-heptose 7-phosphate and D-glycero-beta-D-manno-heptose 7-phosphate from sedoheptulose 7-phosphate: step 1/1. Functionally, catalyzes the isomerization of sedoheptulose 7-phosphate in D-glycero-D-manno-heptose 7-phosphate. This chain is Phosphoheptose isomerase, found in Pseudomonas putida (strain GB-1).